The sequence spans 366 residues: Purple acid phosphatase 3 (366 aa).

A signal peptide spans 1-32 (MTYIYRDTKITTKSTIPFLIFFLFCFSNLSMA). Aspartate 81 is a Fe cation binding site. Asparagine 89 is a glycosylation site (N-linked (GlcNAc...) asparagine). Aspartate 114 and tyrosine 117 together coordinate Fe cation. Aspartate 114 contacts Zn(2+). Residues asparagine 152 and histidine 246 each contribute to the Zn(2+) site. Histidine 255 acts as the Proton donor in catalysis. Histidine 281 provides a ligand contact to Zn(2+). Position 281–283 (281–283 (HDH)) interacts with substrate. Residue histidine 283 participates in Fe cation binding.

The protein belongs to the metallophosphoesterase superfamily. Purple acid phosphatase family. In terms of assembly, homodimer. It depends on Fe cation as a cofactor. Zn(2+) is required as a cofactor. As to expression, expressed in stems, leaves, flowers and siliques.

Its subcellular location is the secreted. It carries out the reaction a phosphate monoester + H2O = an alcohol + phosphate. The polypeptide is Purple acid phosphatase 3 (PAP3) (Arabidopsis thaliana (Mouse-ear cress)).